Reading from the N-terminus, the 144-residue chain is Ribosomal RNA large subunit methyltransferase H (144 aa).

Residues L63, G92, and 111-116 (LSPMTF) contribute to the S-adenosyl-L-methionine site.

It belongs to the RNA methyltransferase RlmH family. As to quaternary structure, homodimer.

The protein localises to the cytoplasm. The catalysed reaction is pseudouridine(1915) in 23S rRNA + S-adenosyl-L-methionine = N(3)-methylpseudouridine(1915) in 23S rRNA + S-adenosyl-L-homocysteine + H(+). Functionally, specifically methylates the pseudouridine at position 1915 (m3Psi1915) in 23S rRNA. The sequence is that of Ribosomal RNA large subunit methyltransferase H from Synechococcus sp. (strain CC9605).